We begin with the raw amino-acid sequence, 362 residues long: Bifunctional chorismate mutase/prephenate dehydratase (362 aa).

Residues 1–92 enclose the Chorismate mutase domain; the sequence is MEELKELRKE…ACLSLEKKIK (92 aa). 4 residues coordinate substrate: arginine 8, arginine 25, lysine 36, and glutamate 49. Residues 93–267 form the Prephenate dehydratase domain; that stretch reads VAYLGPKATF…NFTRFLVIAK (175 aa). In terms of domain architecture, ACT spans 279–356; sequence SILFGVKDEP…QFLKVLGSYP (78 aa).

It localises to the cytoplasm. The catalysed reaction is chorismate = prephenate. It catalyses the reaction prephenate + H(+) = 3-phenylpyruvate + CO2 + H2O. The protein operates within amino-acid biosynthesis; L-phenylalanine biosynthesis; phenylpyruvate from prephenate: step 1/1. It participates in metabolic intermediate biosynthesis; prephenate biosynthesis; prephenate from chorismate: step 1/1. Catalyzes the Claisen rearrangement of chorismate to prephenate and the decarboxylation/dehydration of prephenate to phenylpyruvate. The chain is Bifunctional chorismate mutase/prephenate dehydratase (pheA) from Aquifex aeolicus (strain VF5).